A 184-amino-acid chain; its full sequence is RNA 2',3'-cyclic phosphodiesterase (184 aa).

H40 acts as the Proton donor in catalysis. 2 consecutive short sequence motifs (HXTX) follow at residues 40–43 and 125–128; these read HITL. Catalysis depends on H125, which acts as the Proton acceptor.

It belongs to the 2H phosphoesterase superfamily. ThpR family.

The enzyme catalyses a 3'-end 2',3'-cyclophospho-ribonucleotide-RNA + H2O = a 3'-end 2'-phospho-ribonucleotide-RNA + H(+). In terms of biological role, hydrolyzes RNA 2',3'-cyclic phosphodiester to an RNA 2'-phosphomonoester. In vitro, ligates 5' and 3' half-tRNA molecules with 2',3'-cyclic phosphate and 5'-hydroxyl termini, respectively, to the product containing the 2'-5' phosphodiester linkage. Ligase activity requires GTP, but GTP hydrolysis is not required for the reaction, which is reversible. Ligase activity is weak compared to the phosphodiesterase activity. This chain is RNA 2',3'-cyclic phosphodiesterase, found in Pyrococcus furiosus (strain ATCC 43587 / DSM 3638 / JCM 8422 / Vc1).